Here is a 464-residue protein sequence, read N- to C-terminus: Protein FAM90A12 (464 aa).

Disordered stretches follow at residues methionine 1–leucine 42, proline 70–alanine 389, and alanine 411–proline 437. Composition is skewed to basic and acidic residues over residues glycine 74–alanine 89 and asparagine 97–arginine 114. The segment covering leucine 180 to leucine 197 has biased composition (low complexity).

This sequence belongs to the FAM90 family.

The chain is Protein FAM90A12 from Homo sapiens (Human).